We begin with the raw amino-acid sequence, 546 residues long: Putative serine hydroxymethyltransferase, mitochondrial (546 aa).

The transit peptide at 1-64 directs the protein to the mitochondrion; the sequence is MSSFQSTAAV…RFSSSSIAND (64 aa). Lys-305 is subject to N6-(pyridoxal phosphate)lysine.

It belongs to the SHMT family. Homotetramer. The cofactor is pyridoxal 5'-phosphate.

It localises to the mitochondrion. The catalysed reaction is (6R)-5,10-methylene-5,6,7,8-tetrahydrofolate + glycine + H2O = (6S)-5,6,7,8-tetrahydrofolate + L-serine. The protein operates within one-carbon metabolism; tetrahydrofolate interconversion. Interconversion of serine and glycine. This chain is Putative serine hydroxymethyltransferase, mitochondrial (cbs-2), found in Neurospora crassa (strain ATCC 24698 / 74-OR23-1A / CBS 708.71 / DSM 1257 / FGSC 987).